A 111-amino-acid chain; its full sequence is MIQVLLVTLCLAVFPYQGSSIILESGNVNDYEVVYPRKVTALPKGAIQPKNPCCDAATCKLTPGSQCAEGLCCDQCKFIKAGKICRRARGDNPDYRCTGQSGDCPRKHFYA.

A signal peptide spans methionine 1–serine 20. A propeptide spanning residues isoleucine 21–alanine 46 is cleaved from the precursor. A Disintegrin domain is found at isoleucine 47–alanine 111. Position 48 is a pyrrolidone carboxylic acid; in Disintegrin acostatin-alpha, processed form (glutamine 48). Intrachain disulfides connect cysteine 53/cysteine 76, cysteine 67/cysteine 73, cysteine 72/cysteine 97, and cysteine 85/cysteine 104. A Cell attachment site motif is present at residues arginine 89 to aspartate 91. A propeptide spanning residues tyrosine 110 to alanine 111 is cleaved from the precursor.

It belongs to the disintegrin family. Dimeric disintegrin subfamily. In terms of assembly, heterodimer with subunit beta; disulfide-linked. In terms of tissue distribution, expressed by the venom gland.

It localises to the secreted. Functionally, inhibits fibrinogen interaction with platelets. Acts by binding to alpha-IIb/beta-3 (ITGA2B/ITGB3) on the platelet surface and inhibits ADP-induced platelet aggregation in human platelet-rich plasma. The protein is Disintegrin acostatin-alpha of Agkistrodon contortrix contortrix (Southern copperhead).